The sequence spans 122 residues: Large ribosomal subunit protein uL14 (122 aa).

This sequence belongs to the universal ribosomal protein uL14 family. In terms of assembly, part of the 50S ribosomal subunit. Forms a cluster with proteins L3 and L19. In the 70S ribosome, L14 and L19 interact and together make contacts with the 16S rRNA in bridges B5 and B8.

In terms of biological role, binds to 23S rRNA. Forms part of two intersubunit bridges in the 70S ribosome. The polypeptide is Large ribosomal subunit protein uL14 (Streptococcus suis (strain 05ZYH33)).